The primary structure comprises 207 residues: Large ribosomal subunit protein uL4 (207 aa).

The interval 56–76 is disordered; the sequence is EVRGGGRKPWRQKGTGRARAG. Basic residues predominate over residues 60-71; sequence GGRKPWRQKGTG.

Belongs to the universal ribosomal protein uL4 family. Part of the 50S ribosomal subunit.

Functionally, one of the primary rRNA binding proteins, this protein initially binds near the 5'-end of the 23S rRNA. It is important during the early stages of 50S assembly. It makes multiple contacts with different domains of the 23S rRNA in the assembled 50S subunit and ribosome. In terms of biological role, forms part of the polypeptide exit tunnel. This is Large ribosomal subunit protein uL4 from Desulfitobacterium hafniense (strain Y51).